We begin with the raw amino-acid sequence, 397 residues long: Phosphoglycerate kinase (397 aa).

Substrate is bound by residues D25–N27, R41, H64–R67, R118, and R151. Residues K202, E324, and G350–T353 contribute to the ATP site.

The protein belongs to the phosphoglycerate kinase family. In terms of assembly, monomer.

It localises to the cytoplasm. The catalysed reaction is (2R)-3-phosphoglycerate + ATP = (2R)-3-phospho-glyceroyl phosphate + ADP. The protein operates within carbohydrate degradation; glycolysis; pyruvate from D-glyceraldehyde 3-phosphate: step 2/5. The sequence is that of Phosphoglycerate kinase from Acidovorax ebreus (strain TPSY) (Diaphorobacter sp. (strain TPSY)).